A 342-amino-acid polypeptide reads, in one-letter code: 4-hydroxy-2-oxovalerate aldolase (342 aa).

The 253-residue stretch at 5 to 257 folds into the Pyruvate carboxyltransferase domain; that stretch reads ITLHDMTLRD…DTGVDVWKIQ (253 aa). 13-14 is a binding site for substrate; it reads RD. A Mn(2+)-binding site is contributed by aspartate 14. Histidine 17 acts as the Proton acceptor in catalysis. The substrate site is built by serine 167 and histidine 196. Histidine 196 and histidine 198 together coordinate Mn(2+). Residue tyrosine 287 participates in substrate binding.

The protein belongs to the 4-hydroxy-2-oxovalerate aldolase family.

It carries out the reaction (S)-4-hydroxy-2-oxopentanoate = acetaldehyde + pyruvate. The sequence is that of 4-hydroxy-2-oxovalerate aldolase from Acidovorax sp. (strain JS42).